The following is a 189-amino-acid chain: Bilin-binding protein (189 aa).

The signal sequence occupies residues 1 to 15 (MQYLIVLALVAAASA). 2 disulfide bridges follow: Cys-23–Cys-130 and Cys-57–Cys-185.

Belongs to the calycin superfamily. Lipocalin family. In terms of assembly, homotetramer. As to expression, hemolymph.

The protein resides in the secreted. This protein binds the blue pigments bilins. This is Bilin-binding protein from Pieris brassicae (White butterfly).